Here is a 198-residue protein sequence, read N- to C-terminus: Rac-like GTP-binding protein ARAC3 (198 aa).

Residues 13–21, 31–38, 60–64, and 118–121 each bind GTP; these read GDGAVGKTC, FPTDYVPT, DTAGQ, and TKLD. The short motif at 35–43 is the Effector region element; that stretch reads YVPTVFDNF. The S-palmitoyl cysteine moiety is linked to residue C158. A Cysteine methyl ester modification is found at C195. C195 is lipidated: S-geranylgeranyl cysteine. Residues 196–198 constitute a propeptide, removed in mature form; the sequence is SIL.

Belongs to the small GTPase superfamily. Rho family. In terms of assembly, interacts with Rho GDP-dissociation inhibitor 1 and ICR1. Binds to SPK1 when in the inactive GDP-bound form. Ubiquitous. Preferentially expressed at the tip of root hairs.

It localises to the cytoplasm. It is found in the cell membrane. Inactive GDP-bound Rho GTPases reside in the cytosol, are found in a complex with Rho GDP-dissociation inhibitors (Rho GDIs), and are released from the GDI protein in order to translocate to membranes upon activation. Involved in cell polarity control during the actin-dependent tip growth of root hairs, thus regulating root hair length and root hair initiation. Contributes, in a SPK1-dependent manner, to the prevention of cortical microtubules organization into parallel arrays oriented perpendicular to the axis of cell elongation to limit anisotropic cell growth during petal development. SPK1-dependent activation is required for auxin-mediated inhibition of PIN2 internalization during gravitropic responses. The polypeptide is Rac-like GTP-binding protein ARAC3 (Arabidopsis thaliana (Mouse-ear cress)).